The sequence spans 205 residues: Lymphotoxin-alpha (205 aa).

Residues 1–34 (MTPPERLFLPRVCGTTLHLLLLGLLLVLLPGAQG) form the signal peptide. T41 carries O-linked (GalNAc...) threonine; partial glycosylation. In terms of domain architecture, THD spans 63–205 (PAAHLIGDPS…STVFFGAFAL (143 aa)). N96 carries N-linked (GlcNAc...) asparagine glycosylation.

Belongs to the tumor necrosis factor family. Homotrimer, and heterotrimer of either two LTB and one LTA subunits or (less prevalent) two LTA and one LTB subunits. Interacts with TNFRSF14.

The protein localises to the secreted. The protein resides in the membrane. Its function is as follows. Cytokine that in its homotrimeric form binds to TNFRSF1A/TNFR1, TNFRSF1B/TNFBR and TNFRSF14/HVEM. In its heterotrimeric form with LTB binds to TNFRSF3/LTBR. Lymphotoxin is produced by lymphocytes and is cytotoxic for a wide range of tumor cells in vitro and in vivo. The protein is Lymphotoxin-alpha (LTA) of Homo sapiens (Human).